A 291-amino-acid polypeptide reads, in one-letter code: 4-hydroxy-tetrahydrodipicolinate synthase (291 aa).

T45 is a binding site for pyruvate. Y133 functions as the Proton donor/acceptor in the catalytic mechanism. K161 acts as the Schiff-base intermediate with substrate in catalysis. I203 contributes to the pyruvate binding site.

Belongs to the DapA family. In terms of assembly, homotetramer; dimer of dimers.

It localises to the cytoplasm. The catalysed reaction is L-aspartate 4-semialdehyde + pyruvate = (2S,4S)-4-hydroxy-2,3,4,5-tetrahydrodipicolinate + H2O + H(+). It functions in the pathway amino-acid biosynthesis; L-lysine biosynthesis via DAP pathway; (S)-tetrahydrodipicolinate from L-aspartate: step 3/4. In terms of biological role, catalyzes the condensation of (S)-aspartate-beta-semialdehyde [(S)-ASA] and pyruvate to 4-hydroxy-tetrahydrodipicolinate (HTPA). The chain is 4-hydroxy-tetrahydrodipicolinate synthase from Methylococcus capsulatus (strain ATCC 33009 / NCIMB 11132 / Bath).